We begin with the raw amino-acid sequence, 86 residues long: Phosphocarrier protein HPr (86 aa).

The HPr domain occupies 1–86 (MVKKEAIIKA…LAELIESFKE (86 aa)). His15 acts as the Pros-phosphohistidine intermediate in catalysis.

This sequence belongs to the HPr family.

It is found in the cytoplasm. Functionally, general (non sugar-specific) component of the phosphoenolpyruvate-dependent sugar phosphotransferase system (sugar PTS). This major carbohydrate active-transport system catalyzes the phosphorylation of incoming sugar substrates concomitantly with their translocation across the cell membrane. The phosphoryl group from phosphoenolpyruvate (PEP) is transferred to the phosphoryl carrier protein HPr by enzyme I. Phospho-HPr then transfers it to the PTS EIIA domain. The chain is Phosphocarrier protein HPr (ptsH) from Borreliella burgdorferi (strain ATCC 35210 / DSM 4680 / CIP 102532 / B31) (Borrelia burgdorferi).